The chain runs to 356 residues: Phospho-N-acetylmuramoyl-pentapeptide-transferase (356 aa).

Helical transmembrane passes span 27–47 (AAVATAMILGLWIGPRFILML), 73–93 (TMGGLMILISLMISALLWMDL), 97–117 (FVWACLFVTAGFAVVGFLDDY), 134–154 (LLVEFLIAGVAVLLIVSRTGT), 163–183 (GIVIPLGPFYYVFAMVLIVGF), 195–215 (GLATFPVIIASLTFLVIVYLS), 232–252 (AGELAVFAAAIIGACLAFLWF), 258–278 (AVFMGDTGSLALGGALATIAV), 285–305 (VLVLVGGLFVVEALSVIIQVF), and 333–353 (TVVIRFWIVSIVLALAGLATL).

The protein belongs to the glycosyltransferase 4 family. MraY subfamily. Mg(2+) is required as a cofactor.

The protein resides in the cell inner membrane. It carries out the reaction UDP-N-acetyl-alpha-D-muramoyl-L-alanyl-gamma-D-glutamyl-meso-2,6-diaminopimeloyl-D-alanyl-D-alanine + di-trans,octa-cis-undecaprenyl phosphate = di-trans,octa-cis-undecaprenyl diphospho-N-acetyl-alpha-D-muramoyl-L-alanyl-D-glutamyl-meso-2,6-diaminopimeloyl-D-alanyl-D-alanine + UMP. Its pathway is cell wall biogenesis; peptidoglycan biosynthesis. Catalyzes the initial step of the lipid cycle reactions in the biosynthesis of the cell wall peptidoglycan: transfers peptidoglycan precursor phospho-MurNAc-pentapeptide from UDP-MurNAc-pentapeptide onto the lipid carrier undecaprenyl phosphate, yielding undecaprenyl-pyrophosphoryl-MurNAc-pentapeptide, known as lipid I. This is Phospho-N-acetylmuramoyl-pentapeptide-transferase from Sphingopyxis alaskensis (strain DSM 13593 / LMG 18877 / RB2256) (Sphingomonas alaskensis).